The primary structure comprises 304 residues: Protease HtpX homolog (304 aa).

Helical transmembrane passes span 14–34 and 39–59; these read VFIILGFFIFVLMVGAAIGII and YLNGLILAAVIGAFYILIMVM. H144 provides a ligand contact to Zn(2+). The active site involves E145. H148 is a Zn(2+) binding site. The next 2 helical transmembrane spans lie at 159–179 and 202–222; these read IAIALVAVIAILSDIAMRMIF and AIIYIVALIFVILAPIIATAI. Residue E231 coordinates Zn(2+).

Belongs to the peptidase M48B family. Zn(2+) serves as cofactor.

It is found in the cell membrane. In Listeria monocytogenes serotype 4a (strain HCC23), this protein is Protease HtpX homolog.